Here is a 501-residue protein sequence, read N- to C-terminus: Endonuclease domain-containing 1 protein (501 aa).

Positions 1-21 (MGCARWLALGGLLALAGLLQA) are cleaved as a signal peptide. Position 408 is an N6-acetyllysine (lysine 408).

Belongs to the DNA/RNA non-specific endonuclease family. As to quaternary structure, interacts with RNF26; this interaction is important to modulate innate immune signaling through the cGAS-STING pathway.

The protein localises to the secreted. May act as a DNase and a RNase. Plays a role in the modulation of innate immune signaling through the cGAS-STING pathway by interacting with RNF26. The polypeptide is Endonuclease domain-containing 1 protein (Endod1) (Mus musculus (Mouse)).